We begin with the raw amino-acid sequence, 513 residues long: NAD(P)H-quinone oxidoreductase subunit 2 (513 aa).

Transmembrane regions (helical) follow at residues valine 15 to isoleucine 35, tryptophan 43 to tryptophan 63, leucine 80 to isoleucine 100, leucine 110 to alanine 130, leucine 133 to tyrosine 153, leucine 168 to leucine 188, leucine 211 to valine 231, proline 245 to isoleucine 265, phenylalanine 281 to glutamine 301, methionine 307 to threonine 327, isoleucine 335 to phenylalanine 355, leucine 379 to glycine 399, isoleucine 401 to valine 421, and valine 467 to phenylalanine 487.

This sequence belongs to the complex I subunit 2 family. As to quaternary structure, NDH-1 can be composed of about 15 different subunits; different subcomplexes with different compositions have been identified which probably have different functions.

Its subcellular location is the cellular thylakoid membrane. It catalyses the reaction a plastoquinone + NADH + (n+1) H(+)(in) = a plastoquinol + NAD(+) + n H(+)(out). It carries out the reaction a plastoquinone + NADPH + (n+1) H(+)(in) = a plastoquinol + NADP(+) + n H(+)(out). Functionally, NDH-1 shuttles electrons from an unknown electron donor, via FMN and iron-sulfur (Fe-S) centers, to quinones in the respiratory and/or the photosynthetic chain. The immediate electron acceptor for the enzyme in this species is believed to be plastoquinone. Couples the redox reaction to proton translocation, and thus conserves the redox energy in a proton gradient. Cyanobacterial NDH-1 also plays a role in inorganic carbon-concentration. The polypeptide is NAD(P)H-quinone oxidoreductase subunit 2 (Microcystis aeruginosa (strain NIES-843 / IAM M-2473)).